A 442-amino-acid polypeptide reads, in one-letter code: Proline--tRNA ligase (442 aa).

This sequence belongs to the class-II aminoacyl-tRNA synthetase family. ProS type 2 subfamily. In terms of assembly, homodimer.

The protein resides in the cytoplasm. It carries out the reaction tRNA(Pro) + L-proline + ATP = L-prolyl-tRNA(Pro) + AMP + diphosphate. Its function is as follows. Catalyzes the attachment of proline to tRNA(Pro) in a two-step reaction: proline is first activated by ATP to form Pro-AMP and then transferred to the acceptor end of tRNA(Pro). The chain is Proline--tRNA ligase from Mesorhizobium japonicum (strain LMG 29417 / CECT 9101 / MAFF 303099) (Mesorhizobium loti (strain MAFF 303099)).